Here is a 197-residue protein sequence, read N- to C-terminus: Prefoldin subunit 3 (197 aa).

An N-acetylalanine modification is found at Ala-2. Lys-59 is modified (N6-acetyllysine).

It belongs to the prefoldin subunit alpha family. Heterohexamer of two PFD-alpha type and four PFD-beta type subunits. Binds to the C-terminal part of VHL.

The protein resides in the cytoplasm. It is found in the nucleus. Its function is as follows. Binds specifically to cytosolic chaperonin (c-CPN) and transfers target proteins to it. Binds to nascent polypeptide chain and promotes folding in an environment in which there are many competing pathways for nonnative proteins. In Bos taurus (Bovine), this protein is Prefoldin subunit 3 (VBP1).